A 510-amino-acid polypeptide reads, in one-letter code: 1,3-beta-glucanosyltransferase gas5 (510 aa).

The N-terminal stretch at 1-22 (MNFLHFLTTSLLLLGGSRLALA) is a signal peptide. Cys-70 and Cys-99 are disulfide-bonded. Residue Tyr-88 participates in (1,3-beta-D-glucosyl)n binding. An N-linked (GlcNAc...) asparagine glycan is attached at Asn-147. Residues Asn-158, Glu-159, Asp-200, and Arg-205 each contribute to the (1,3-beta-D-glucosyl)n site. The active-site Proton donor is the Glu-159. Disulfide bonds link Cys-214/Cys-353 and Cys-232/Cys-264. N-linked (GlcNAc...) asparagine glycosylation is found at Asn-216 and Asn-252. The active-site Nucleophile is the Glu-261. A (1,3-beta-D-glucosyl)n-binding site is contributed by Tyr-300. Residues Asn-318, Asn-337, and Asn-397 are each glycosylated (N-linked (GlcNAc...) asparagine). Residues 424–456 (QSSTSGSSSGSSSASTTASSSSVSSGSSISSGS) form a disordered region. Ser-485 carries GPI-anchor amidated serine lipidation. A propeptide spans 486–510 (SASTFNLSRFYVFAGILAISGLVFA) (removed in mature form). Asn-491 carries an N-linked (GlcNAc...) asparagine glycan.

This sequence belongs to the glycosyl hydrolase 72 family. Post-translationally, the GPI-anchor is attached to the protein in the endoplasmic reticulum and serves to target the protein to the cell surface. There, the glucosamine-inositol phospholipid moiety is cleaved off and the GPI-modified mannoprotein is covalently attached via its lipidless GPI glycan remnant to the 1,6-beta-glucan of the outer cell wall layer.

It is found in the secreted. The protein localises to the cell wall. The protein resides in the membrane. Its function is as follows. Splits internally a 1,3-beta-glucan molecule and transfers the newly generated reducing end (the donor) to the non-reducing end of another 1,3-beta-glucan molecule (the acceptor) forming a 1,3-beta linkage, resulting in the elongation of 1,3-beta-glucan chains in the cell wall. This is 1,3-beta-glucanosyltransferase gas5 (gas5) from Schizosaccharomyces pombe (strain 972 / ATCC 24843) (Fission yeast).